A 577-amino-acid chain; its full sequence is Cleavage stimulation factor subunit 2 (577 aa).

S14 carries the post-translational modification Phosphoserine. Residues 16 to 94 (RSVFVGNIPY…RALRVDNAAS (79 aa)) form the RRM domain. An interactions with CSTF3 and SYMPK region spans residues 108-248 (APVIESPYGE…VNGAPPLMQA (141 aa)). A Glycyl lysine isopeptide (Lys-Gly) (interchain with G-Cter in SUMO2) cross-link involves residue K189. Residues 206–243 (QPVHGAGPGSGSNVSMNQQNPQAPQAQSLGGMHVNGAP) are disordered. Positions 222 to 232 (NQQNPQAPQAQ) are enriched in low complexity. At R308 the chain carries Omega-N-methylarginine. A disordered region spans residues 340–409 (EVEPRGYLGP…DGRGGRDPRG (70 aa)). Residues 360–373 (PGHESRGPPPHELR) are compositionally biased toward basic and acidic residues. Residues 410 to 414 (IDARG) form a 1; approximate repeat. A 12 X 5 AA tandem repeats of M-E-A-R-[AG] region spans residues 410–469 (IDARGMEARAMEARGLDARGLEARAMEARAMEARAMEARAMEARAMEVRGMEARGMDTRG). A run of 2 repeats spans residues 415 to 419 (MEARA) and 420 to 424 (MEARG). The 4; approximate repeat unit spans residues 425 to 429 (LDARG). The 5; approximate repeat unit spans residues 430–434 (LEARA). Tandem repeats lie at residues 435 to 439 (MEARA), 440 to 444 (MEARA), 445 to 449 (MEARA), and 450 to 454 (MEARA). The 10; approximate repeat unit spans residues 455 to 459 (MEVRG). Residues 460-464 (MEARG) form repeat 11. One copy of the 12; approximate repeat lies at 465–469 (MDTRG). Residues R468 and R475 each carry the omega-N-methylarginine modification. Residues 508–532 (GMQGASIQGGSQPGGFSPGQNQVTP) are disordered. Residues 514-577 (IQGGSQPGGF…EQIQKSTGAP (64 aa)) form an interaction with RPO2TC1 region. Phosphoserine occurs at positions 518 and 524.

As to quaternary structure, the CSTF complex is composed of CSTF1 (50 kDa subunit), CSTF2 (64 kDa subunit) and CSTF3 (77 kDa subunit). CSTF2 directly interacts with CSTF3, SYMPK and RPO2TC1. Interacts with HSF1 in heat-stressed cells. Interacts with CPSF2, CPSF3 and FIP1L1. Interacts with DDX1.

It is found in the nucleus. In terms of biological role, one of the multiple factors required for polyadenylation and 3'-end cleavage of mammalian pre-mRNAs. This subunit is directly involved in the binding to pre-mRNAs. This Homo sapiens (Human) protein is Cleavage stimulation factor subunit 2 (CSTF2).